Reading from the N-terminus, the 2543-residue chain is Highly reducing polyketide synthase GPY1 (2543 aa).

The Ketosynthase family 3 (KS3) domain maps to 9–435; the sequence is REPIAIVSMA…GSTAHAVVEF (427 aa). Catalysis depends on for beta-ketoacyl synthase activity residues cysteine 182, histidine 318, and histidine 358. Positions 574–881 are malonyl-CoA:ACP transacylase (MAT) domain; the sequence is TFTGQGAMWS…PFFATMLRNA (308 aa). The tract at residues 953–1089 is N-terminal hotdog fold; sequence HEILGSRCRG…GRAAVLETSK (137 aa). A dehydratase (DH) domain region spans residues 953–1253; the sequence is HEILGSRCRG…GLQMDRATSD (301 aa). One can recognise a PKS/mFAS DH domain in the interval 953-1256; the sequence is HEILGSRCRG…MDRATSDDNT (304 aa). The active-site Proton acceptor; for dehydratase activity is histidine 985. The C-terminal hotdog fold stretch occupies residues 1103 to 1256; that stretch reads MPLKVPLKSY…MDRATSDDNT (154 aa). Catalysis depends on aspartate 1169, which acts as the Proton donor; for dehydratase activity. The methyltransferase (CMet) domain stretch occupies residues 1399–1587; it reads NDLLYRFYEE…LDEWRNELAA (189 aa). The segment at 1830–2136 is enoyl reductase (ER) domain; the sequence is GILESLTMAQ…IEGTSNKQVV (307 aa). Positions 2161-2335 are ketoreductase (KR) domain; that stretch reads TYIITGGLGG…ASSVDLGFVE (175 aa). The Carrier domain occupies 2464–2541; sequence ALQPFVCTAL…DLSARVSRMI (78 aa). The residue at position 2501 (serine 2501) is an O-(pantetheine 4'-phosphoryl)serine.

Functionally, highly reducing polyketide synthase; part of the gene cluster that mediates the biosynthesis of gibepyrone A, a 2H-pyran-2-one metabolite exhibiting a moderate antimicrobial activity against Gram-positive bacteria and yeasts. The highly reducing polyketide synthase GPY1 is sufficient to produce gibepyrone A. GPY1 uses an acetyl-CoA starter unit, three malonyl-CoA extender units, and two SAM-dependent methylations to establish the gibepyrone A carbon backbone, followed by product release upon intramolecular cyclization. The gibepyrone A derivatives gibepyrones B and D are produced by cluster-independent P450 monooxygenases, probably to protect the fungus from the toxic product. In contrast, the formation of gibepyrones E and F from gibepyrone A is a spontaneous process and independent of enzymatic activity. The chain is Highly reducing polyketide synthase GPY1 from Gibberella fujikuroi (strain CBS 195.34 / IMI 58289 / NRRL A-6831) (Bakanae and foot rot disease fungus).